A 656-amino-acid polypeptide reads, in one-letter code: Tetratricopeptide repeat protein 30 homolog (656 aa).

TPR repeat units lie at residues 9–42, 43–76, 141–174, 176–208, 238–271, 378–412, 416–449, 451–484, and 537–570; these read EGEFTSTIYTLIHEHKFNDAIRILQYQHERNPKN, LAALSLLAYCYYYTQDFMNAADCYSQLSYNFPQY, AAVIINTACIDYKEGNYEEALKKFNEATEFSGYQ, GLAYSIALCHYRRGDYDSALKLISEIINRGVKD, IEAFNLKFAIYYRTKDFKAAKESLTDMPPRNEHD, RKTAIEIQIKKEQKTTDSDDSLEMRNLIESYDDSL, LPVLMTYAKYYWDKRDYQAVEKLFRNSVDYCKEH, TWKLNVAHTIFMQEKKYKDAAAFYEPIVHKKYDD, and SIISLVIGSLYCSKGNFEFGISRVVKALEPPEKK.

Belongs to the TTC30/dfy-1/fleer family. In terms of assembly, component of the IFT complex B composed of at least che-2, che-13, dyf-1, dyf-3, dyf-6, dyf-11, dyf-13, ift-20, ift-74, ift-81, ifta-2, osm-1, osm-5 and osm-6. Expressed in most amphid, both phasmid and several labial-quadrant neurons.

The protein localises to the cell projection. It localises to the cilium. Functionally, plays a role in anterograde intraflagellar transport (IFT), the process by which cilia precursors are transported from the base of the cilium to the site of their incorporation at the tip. Specifically required for the kinesin osm-3 to dock onto and move the IFT particles which contain these precursors. Component of the intraflagellar transport (IFT) complex B required for transport of proteins in the motile cilium. May be required for ciliary entrance and transport of specific ciliary cargo proteins such as che-3 which are related to motility. Required for polyglutamylation of axonemal tubulin in sensory cilia. The polypeptide is Tetratricopeptide repeat protein 30 homolog (Caenorhabditis elegans).